Consider the following 144-residue polypeptide: Large ribosomal subunit protein uL11 (144 aa).

This sequence belongs to the universal ribosomal protein uL11 family. In terms of assembly, part of the ribosomal stalk of the 50S ribosomal subunit. Interacts with L10 and the large rRNA to form the base of the stalk. L10 forms an elongated spine to which L12 dimers bind in a sequential fashion forming a multimeric L10(L12)X complex. In terms of processing, one or more lysine residues are methylated.

Its function is as follows. Forms part of the ribosomal stalk which helps the ribosome interact with GTP-bound translation factors. This is Large ribosomal subunit protein uL11 from Polaromonas sp. (strain JS666 / ATCC BAA-500).